The sequence spans 741 residues: Isocitrate dehydrogenase [NADP] (741 aa).

NADP(+)-binding residues include Asn85 and Ser87. D-threo-isocitrate is bound by residues Ser132, Asn135, Arg139, Arg145, and Lys255. Residue Asn135 participates in NADP(+) binding. Position 350 (Asp350) interacts with Mn(2+). The D-threo-isocitrate site is built by Tyr420 and Arg547. Residue Asp548 participates in Mn(2+) binding. Ser585, His589, Arg600, Asp602, and Arg649 together coordinate NADP(+).

This sequence belongs to the monomeric-type IDH family. As to quaternary structure, monomer. Mg(2+) is required as a cofactor. Requires Mn(2+) as cofactor.

Its subcellular location is the cytoplasm. It catalyses the reaction D-threo-isocitrate + NADP(+) = 2-oxoglutarate + CO2 + NADPH. Activity is inhibited in the presence of Ca(2+). Functionally, catalyzes the oxidative decarboxylation of isocitrate to 2-oxoglutarate and carbon dioxide with the concomitant reduction of NADP(+). The polypeptide is Isocitrate dehydrogenase [NADP] (Azotobacter vinelandii).